We begin with the raw amino-acid sequence, 242 residues long: ATP synthase subunit a (242 aa).

The next 6 membrane-spanning stretches (helical) occupy residues 29–49 (SSIY…LAFY), 84–104 (FIPL…LGMT), 114–134 (IIVT…VGFV), 140–160 (FLTL…MIVI), 181–201 (MAGH…MIYL), and 203–223 (FLPI…AILQ).

It belongs to the ATPase A chain family. F-type ATPases have 2 components, CF(1) - the catalytic core - and CF(0) - the membrane proton channel. CF(1) has five subunits: alpha(3), beta(3), gamma(1), delta(1), epsilon(1). CF(0) has three main subunits: a(1), b(2) and c(9-12). The alpha and beta chains form an alternating ring which encloses part of the gamma chain. CF(1) is attached to CF(0) by a central stalk formed by the gamma and epsilon chains, while a peripheral stalk is formed by the delta and b chains.

The protein resides in the cell inner membrane. Functionally, key component of the proton channel; it plays a direct role in the translocation of protons across the membrane. In Rickettsia akari (strain Hartford), this protein is ATP synthase subunit a.